A 297-amino-acid chain; its full sequence is Pyridoxal 5'-phosphate synthase subunit PdxS (297 aa).

D-ribose 5-phosphate is bound at residue Asp27. Lys84 functions as the Schiff-base intermediate with D-ribose 5-phosphate in the catalytic mechanism. Gly156 is a binding site for D-ribose 5-phosphate. Arg168 lines the D-glyceraldehyde 3-phosphate pocket. Residues Gly217 and 238 to 239 (GS) each bind D-ribose 5-phosphate.

It belongs to the PdxS/SNZ family. In the presence of PdxT, forms a dodecamer of heterodimers.

The enzyme catalyses aldehydo-D-ribose 5-phosphate + D-glyceraldehyde 3-phosphate + L-glutamine = pyridoxal 5'-phosphate + L-glutamate + phosphate + 3 H2O + H(+). It functions in the pathway cofactor biosynthesis; pyridoxal 5'-phosphate biosynthesis. Functionally, catalyzes the formation of pyridoxal 5'-phosphate from ribose 5-phosphate (RBP), glyceraldehyde 3-phosphate (G3P) and ammonia. The ammonia is provided by the PdxT subunit. Can also use ribulose 5-phosphate and dihydroxyacetone phosphate as substrates, resulting from enzyme-catalyzed isomerization of RBP and G3P, respectively. The sequence is that of Pyridoxal 5'-phosphate synthase subunit PdxS from Corynebacterium efficiens (strain DSM 44549 / YS-314 / AJ 12310 / JCM 11189 / NBRC 100395).